A 1006-amino-acid polypeptide reads, in one-letter code: Multiple C2 domain and transmembrane region protein 9 (1006 aa).

The 108-residue stretch at 1-108 (MSNIKLGVEV…PRSEAAPFNY (108 aa)) folds into the C2 1 domain. The disordered stretch occupies residues 135 to 156 (VTPSVPTPVPESPQAYSPSPRK). 3 C2 domains span residues 251-371 (RGTE…PQWY), 411-536 (SDSS…DRWV), and 579-704 (NSSD…THAY). Residues Asp284, Asp290, Asp337, Asp339, and Asp344 each contribute to the Ca(2+) site. The next 2 helical transmembrane spans lie at 842–862 (MLVT…AVIG) and 946–966 (ATAI…ITPF).

Belongs to the MCTP family. Ca(2+) serves as cofactor. Expressed in incipient leaf primordia and roots meristems. Observed in flowers.

It localises to the cell membrane. It is found in the cytoplasm. Functionally, may function as a signaling molecule by regulating the trafficking of other regulators. The polypeptide is Multiple C2 domain and transmembrane region protein 9 (Arabidopsis thaliana (Mouse-ear cress)).